Here is a 945-residue protein sequence, read N- to C-terminus: Leucine--tRNA ligase (945 aa).

Residues proline 43–histidine 53 carry the 'HIGH' region motif. The 'KMSKS' region motif lies at lysine 638–serine 642. Lysine 641 lines the ATP pocket.

The protein belongs to the class-I aminoacyl-tRNA synthetase family.

Its subcellular location is the cytoplasm. It catalyses the reaction tRNA(Leu) + L-leucine + ATP = L-leucyl-tRNA(Leu) + AMP + diphosphate. This is Leucine--tRNA ligase from Pyrobaculum neutrophilum (strain DSM 2338 / JCM 9278 / NBRC 100436 / V24Sta) (Thermoproteus neutrophilus).